Consider the following 369-residue polypeptide: Aminomethyltransferase (369 aa).

This sequence belongs to the GcvT family. In terms of assembly, the glycine cleavage system is composed of four proteins: P, T, L and H.

It carries out the reaction N(6)-[(R)-S(8)-aminomethyldihydrolipoyl]-L-lysyl-[protein] + (6S)-5,6,7,8-tetrahydrofolate = N(6)-[(R)-dihydrolipoyl]-L-lysyl-[protein] + (6R)-5,10-methylene-5,6,7,8-tetrahydrofolate + NH4(+). In terms of biological role, the glycine cleavage system catalyzes the degradation of glycine. This Xanthomonas oryzae pv. oryzae (strain MAFF 311018) protein is Aminomethyltransferase.